A 122-amino-acid polypeptide reads, in one-letter code: Large ribosomal subunit protein uL14 (122 aa).

It belongs to the universal ribosomal protein uL14 family. Part of the 50S ribosomal subunit. Forms a cluster with proteins L3 and L19. In the 70S ribosome, L14 and L19 interact and together make contacts with the 16S rRNA in bridges B5 and B8.

Functionally, binds to 23S rRNA. Forms part of two intersubunit bridges in the 70S ribosome. This chain is Large ribosomal subunit protein uL14, found in Burkholderia vietnamiensis (strain G4 / LMG 22486) (Burkholderia cepacia (strain R1808)).